Reading from the N-terminus, the 319-residue chain is Lipoyl synthase (319 aa).

Residues 5 to 31 (LDTISANPVRPRHPEKANRPDALSPPK) form a disordered region. [4Fe-4S] cluster-binding residues include Cys-61, Cys-66, Cys-72, Cys-87, Cys-91, Cys-94, and Ser-300. The 217-residue stretch at 73-289 (WDKKHATFMI…ETVAYTKGFL (217 aa)) folds into the Radical SAM core domain.

Belongs to the radical SAM superfamily. Lipoyl synthase family. The cofactor is [4Fe-4S] cluster.

The protein localises to the cytoplasm. The enzyme catalyses [[Fe-S] cluster scaffold protein carrying a second [4Fe-4S](2+) cluster] + N(6)-octanoyl-L-lysyl-[protein] + 2 oxidized [2Fe-2S]-[ferredoxin] + 2 S-adenosyl-L-methionine + 4 H(+) = [[Fe-S] cluster scaffold protein] + N(6)-[(R)-dihydrolipoyl]-L-lysyl-[protein] + 4 Fe(3+) + 2 hydrogen sulfide + 2 5'-deoxyadenosine + 2 L-methionine + 2 reduced [2Fe-2S]-[ferredoxin]. It functions in the pathway protein modification; protein lipoylation via endogenous pathway; protein N(6)-(lipoyl)lysine from octanoyl-[acyl-carrier-protein]: step 2/2. Its function is as follows. Catalyzes the radical-mediated insertion of two sulfur atoms into the C-6 and C-8 positions of the octanoyl moiety bound to the lipoyl domains of lipoate-dependent enzymes, thereby converting the octanoylated domains into lipoylated derivatives. This chain is Lipoyl synthase, found in Nitrobacter winogradskyi (strain ATCC 25391 / DSM 10237 / CIP 104748 / NCIMB 11846 / Nb-255).